Reading from the N-terminus, the 601-residue chain is Nuclear receptor subfamily 2 group C member 1 (601 aa).

A required for interaction with KAT2B region spans residues methionine 1 to methionine 179. Positions phenylalanine 111–cysteine 186 form a DNA-binding region, nuclear receptor. 2 NR C4-type zinc fingers span residues cysteine 114–cysteine 134 and cysteine 150–cysteine 169. Phosphoserine occurs at positions 198 and 216. Threonine 221 is modified (phosphothreonine). Residue threonine 223 is modified to Phosphothreonine; by MAPK1. Lysine 251 participates in a covalent cross-link: Glycyl lysine isopeptide (Lys-Gly) (interchain with G-Cter in SUMO); alternate. Lysine 251 is covalently cross-linked (Glycyl lysine isopeptide (Lys-Gly) (interchain with G-Cter in SUMO2); alternate). The NR LBD domain occupies glycine 349–glutamate 591. Residue serine 582 is modified to Phosphoserine; by PKC. Residues proline 585–leucine 601 form a required for interaction with NRIP1 region. Lysine 589 is covalently cross-linked (Glycyl lysine isopeptide (Lys-Gly) (interchain with G-Cter in SUMO2)).

This sequence belongs to the nuclear hormone receptor family. NR2 subfamily. As to quaternary structure, homodimer. Heterodimer; with NR2C2 which is required for chromatin remodeling and for binding to promoter regions such as globin DR1 repeats. Interacts with ESR1; the interaction prevents homodimerization of ESR1 and suppresses its transcriptional activity and cell growth. Interacts with NRIP1 (via its LXXLL motifs); the interaction provides corepressor activity. Interacts with HDAC3 (via the DNA-binding domain); the interaction recruits phosphorylated NR2C1 to PML bodies for sumoylation. Interacts with HDAC4 (via the DNA-binding domain). Interacts with PIAS1; the interaction is required for sumoylation of NR2C1. Interacts with UBE2I; the interaction is required for sumoylation of NR2C1. Interacts with KAT2B; the interaction acts as a corepressor of gene expression. Post-translationally, sumoylation requires both PIAS1 and UBE2I. Sumoylation appears to dissociate NR2C1 from the PML nuclear bodies. Enhances the interaction with NRIP1 but inhibits interaction with KAT2B. In proliferating cells, stimulation by all-trans retinoic acid, activation of MAPK1-mediated phosphorylation and recruitment to PML bodies with subsequent sumoylation, suppresses OCT4 expression. Phosphorylated on several serine and threonine residues. Phosphorylation on Thr-223, stimulated by all-trans retinoic acid (atRA) mediates PML location and sumoylation in proliferating cells which then modulates its association with effector molecules, KAT2B and NRIP1. Phosphorylation on Ser-582 by PKC is important for protein stability and function as activator of RARB.

The protein localises to the nucleus. It localises to the PML body. In terms of biological role, orphan nuclear receptor. Binds the IR7 element in the promoter of its own gene in an autoregulatory negative feedback mechanism. Primarily repressor of a broad range of genes including ESR1 and RARB. Together with NR2C2, forms the core of the DRED (direct repeat erythroid-definitive) complex that represses embryonic and fetal globin transcription. Binds to hormone response elements (HREs) consisting of two 5'-AGGTCA-3' half site direct repeat consensus sequences. Also activator of OCT4 gene expression. Plays a fundamental role in early embryogenesis and regulates embryonic stem cell proliferation and differentiation. Mediator of retinoic acid-regulated preadipocyte proliferation. The chain is Nuclear receptor subfamily 2 group C member 1 (NR2C1) from Pongo abelii (Sumatran orangutan).